We begin with the raw amino-acid sequence, 331 residues long: tRNA N6-adenosine threonylcarbamoyltransferase (331 aa).

Fe cation is bound by residues His-109, His-113, and Tyr-130. Residues 130-134 (YLSGG), Asp-162, Asp-183, and Ser-262 each bind substrate. Residue Asp-290 participates in Fe cation binding.

This sequence belongs to the KAE1 / TsaD family. It depends on Fe(2+) as a cofactor.

It localises to the cytoplasm. It carries out the reaction L-threonylcarbamoyladenylate + adenosine(37) in tRNA = N(6)-L-threonylcarbamoyladenosine(37) in tRNA + AMP + H(+). Required for the formation of a threonylcarbamoyl group on adenosine at position 37 (t(6)A37) in tRNAs that read codons beginning with adenine. Is probably involved in the transfer of the threonylcarbamoyl moiety of threonylcarbamoyl-AMP (TC-AMP) to the N6 group of A37. This chain is tRNA N6-adenosine threonylcarbamoyltransferase, found in Saccharolobus islandicus (strain Y.G.57.14 / Yellowstone #1) (Sulfolobus islandicus).